The sequence spans 167 residues: Putative N-acetylgalactosamine-6-phosphate deacetylase (167 aa).

It belongs to the metallo-dependent hydrolases superfamily. NagA family.

It carries out the reaction N-acetyl-D-galactosamine 6-phosphate + H2O = D-galactosamine 6-phosphate + acetate. The protein is Putative N-acetylgalactosamine-6-phosphate deacetylase (agaA) of Escherichia coli (strain K12).